The primary structure comprises 199 residues: Fe/S biogenesis protein NfuA (199 aa).

[4Fe-4S] cluster-binding residues include C151 and C154.

The protein belongs to the NfuA family. As to quaternary structure, homodimer. [4Fe-4S] cluster is required as a cofactor.

Functionally, involved in iron-sulfur cluster biogenesis. Binds a 4Fe-4S cluster, can transfer this cluster to apoproteins, and thereby intervenes in the maturation of Fe/S proteins. Could also act as a scaffold/chaperone for damaged Fe/S proteins. The protein is Fe/S biogenesis protein NfuA of Xylella fastidiosa (strain M12).